Reading from the N-terminus, the 506-residue chain is Kynurenine 3-monooxygenase (506 aa).

A disordered region spans residues 153 to 175 (QETSLLPGEESEKDKKQNTEDED). The span at 162–171 (ESEKDKKQNT) shows a compositional bias: basic and acidic residues.

This sequence belongs to the aromatic-ring hydroxylase family. KMO subfamily. FAD serves as cofactor.

The protein resides in the mitochondrion outer membrane. It catalyses the reaction L-kynurenine + NADPH + O2 + H(+) = 3-hydroxy-L-kynurenine + NADP(+) + H2O. The protein operates within cofactor biosynthesis; NAD(+) biosynthesis; quinolinate from L-kynurenine: step 1/3. Functionally, catalyzes the hydroxylation of L-kynurenine (L-Kyn) to form 3-hydroxy-L-kynurenine (L-3OHKyn). Required for synthesis of quinolinic acid. This Cryptococcus neoformans var. neoformans serotype D (strain B-3501A) (Filobasidiella neoformans) protein is Kynurenine 3-monooxygenase.